Here is a 286-residue protein sequence, read N- to C-terminus: N-alpha-acetyltransferase 80 (286 aa).

The interval 33–54 (TFNPGPTELTLDPEHQPEETPA) is disordered. In terms of domain architecture, N-acetyltransferase spans 60–207 (LTLEPVHRRP…VFTSRRLPAT (148 aa)). Residues R85 and 90-93 (RLHS) contribute to the substrate site. Acetyl-CoA-binding positions include 141 to 143 (VVV), 149 to 154 (GRGFGR), and Q179. The tract at residues 212-269 (FPTAPSPRPPRKAPNLTAQAAPRGPKGPPLPPPPPLPECLTISPPVPSGPPSKSLLET) is disordered. Over residues 236–248 (PKGPPLPPPPPLP) the composition is skewed to pro residues.

Belongs to the acetyltransferase family. Strongly expressed in heart and skeletal muscle, followed by brain and pancreas, with weak expression in kidney, liver, and lung and no expression in placenta.

It localises to the cytoplasm. The protein resides in the cytosol. It carries out the reaction N-terminal L-aspartyl-L-aspartyl-L-aspartyl-[protein] + acetyl-CoA = N-terminal N-acetyl-L-aspartyl-L-aspartyl-L-aspartyl-[protein] + CoA + H(+). It catalyses the reaction N-terminal L-glutamyl-L-glutamyl-L-glutamyl-[protein] + acetyl-CoA = N-terminal N-acetyl-L-glutamyl-L-glutamyl-L-glutamyl-[protein] + CoA + H(+). In terms of biological role, N-alpha-acetyltransferase that specifically mediates the acetylation of the acidic amino terminus of processed forms of beta- and gamma-actin (ACTB and ACTG, respectively). N-terminal acetylation of processed beta- and gamma-actin regulates actin filament depolymerization and elongation. In vivo, preferentially displays N-terminal acetyltransferase activity towards acid N-terminal sequences starting with Asp-Asp-Asp and Glu-Glu-Glu. In vitro, shows high activity towards Met-Asp-Glu-Leu and Met-Asp-Asp-Asp. May act as a tumor suppressor. The sequence is that of N-alpha-acetyltransferase 80 from Homo sapiens (Human).